The primary structure comprises 366 residues: G kinase-anchoring protein 1 (366 aa).

Residues 1–95 form an interaction with IRS1 region; sequence MASAVLSSVL…SHSVCNVQHE (95 aa). A disordered region spans residues 20 to 105; the sequence is QVDSGSGSDS…LSLPNPVQKE (86 aa). 3 positions are modified to phosphoserine: Ser-23, Ser-25, and Ser-27. Over residues 39–50 the composition is skewed to polar residues; the sequence is NGKSQTLGNKST. The stretch at 46-77 forms a coiled coil; that stretch reads GNKSTANEKKREKRRKKKEQQQSEANELRNLA. Ser-106 carries the phosphoserine; by PKG modification. 3 coiled-coil regions span residues 129 to 160, 250 to 299, and 326 to 353; these read DLEKALLLSKLEYEEHRQDYENAENASTQTKV, LKDG…MLQE, and VSSLHAALEQERSKVKVLQAELAKYQGG.

The protein belongs to the GKAP1 family. Interacts with PRKG1 and IRS1.

The protein resides in the golgi apparatus. Regulates insulin-dependent IRS1 tyrosine phosphorylation in adipocytes by modulating the availability of IRS1 to IR tyrosine kinase. Its association with IRS1 is required for insulin-induced translocation of SLC2A4 to the cell membrane. Involved in TNF-induced impairment of insulin-dependent IRS1 tyrosine phosphorylation. The sequence is that of G kinase-anchoring protein 1 (Gkap1) from Rattus norvegicus (Rat).